Reading from the N-terminus, the 172-residue chain is Translationally-controlled tumor protein homolog (172 aa).

The region spanning 1 to 172 (MIIYRDCISQ…FKDGLEMEKC (172 aa)) is the TCTP domain.

It belongs to the TCTP family. Expressed by the venom gland.

The protein resides in the secreted. Its function is as follows. Venom protein that causes edema, enhances vascular permeability and is likely related to the inflammatory activity of the venom. In Crotalus adamanteus (Eastern diamondback rattlesnake), this protein is Translationally-controlled tumor protein homolog.